A 296-amino-acid polypeptide reads, in one-letter code: Fructose-bisphosphate aldolase class 1 (296 aa).

The Proton acceptor role is filled by E175. The active-site Schiff-base intermediate with dihydroxyacetone-P is the K212.

The protein belongs to the class I fructose-bisphosphate aldolase family.

It catalyses the reaction beta-D-fructose 1,6-bisphosphate = D-glyceraldehyde 3-phosphate + dihydroxyacetone phosphate. The protein operates within carbohydrate degradation; glycolysis; D-glyceraldehyde 3-phosphate and glycerone phosphate from D-glucose: step 4/4. The sequence is that of Fructose-bisphosphate aldolase class 1 (fda) from Staphylococcus epidermidis (strain ATCC 12228 / FDA PCI 1200).